The chain runs to 763 residues: Heat shock 70 kDa protein 16 (763 aa).

Disordered regions lie at residues Ile509–Gly529 and Glu701–Asp763. At Ser528 the chain carries Phosphoserine. Over residues Glu701 to Asn714 the composition is skewed to basic and acidic residues.

It belongs to the heat shock protein 70 (TC 1.A.33) family. HSP110/SSE subfamily.

This chain is Heat shock 70 kDa protein 16 (HSP70-16), found in Arabidopsis thaliana (Mouse-ear cress).